Consider the following 243-residue polypeptide: MIDIHSHIVFDVDDGPKSREESKALLAESYRQGVRTIVSTSHRRKGMFETPEEKIAENFLQVREIAKEVASDLVIAYGAEIYYTPDVLDKLEKKRIPTLNDSRYALIEFSMNTPYRDIHSALSKILMLGITPVIAHIERYDALENNEKRVRELIDMGCYTQVNSSHVLKPKLFGERYKFMKKRAQYFLEQDLVHVIASDMHNLDGRPPHMAEAYDLVTQKYGEAKAQELFIDNPRKIVMDQLI.

It belongs to the metallo-dependent hydrolases superfamily. CpsB/CapC family. The cofactor is Mn(2+).

It catalyses the reaction O-phospho-L-tyrosyl-[protein] + H2O = L-tyrosyl-[protein] + phosphate. It participates in capsule biogenesis; capsule polysaccharide biosynthesis. Its function is as follows. Dephosphorylates CpsD. Involved in the regulation of capsular polysaccharide biosynthesis. This chain is Tyrosine-protein phosphatase CpsB (cpsB), found in Streptococcus pneumoniae serotype 4 (strain ATCC BAA-334 / TIGR4).